The primary structure comprises 87 residues: Small ribosomal subunit protein uS15 (87 aa).

It belongs to the universal ribosomal protein uS15 family. In terms of assembly, part of the 30S ribosomal subunit. Forms a bridge to the 50S subunit in the 70S ribosome, contacting the 23S rRNA.

In terms of biological role, one of the primary rRNA binding proteins, it binds directly to 16S rRNA where it helps nucleate assembly of the platform of the 30S subunit by binding and bridging several RNA helices of the 16S rRNA. Its function is as follows. Forms an intersubunit bridge (bridge B4) with the 23S rRNA of the 50S subunit in the ribosome. In Alkaliphilus oremlandii (strain OhILAs) (Clostridium oremlandii (strain OhILAs)), this protein is Small ribosomal subunit protein uS15.